A 338-amino-acid chain; its full sequence is Biotin synthase (338 aa).

The 228-residue stretch at 50-277 folds into the Radical SAM core domain; it reads QAVQLSTLMS…KSYVRLSAGR (228 aa). [4Fe-4S] cluster is bound by residues Cys65, Cys69, and Cys72. Residues Cys109, Cys140, Cys200, and Arg272 each coordinate [2Fe-2S] cluster.

This sequence belongs to the radical SAM superfamily. Biotin synthase family. Homodimer. Requires [4Fe-4S] cluster as cofactor. The cofactor is [2Fe-2S] cluster.

The enzyme catalyses (4R,5S)-dethiobiotin + (sulfur carrier)-SH + 2 reduced [2Fe-2S]-[ferredoxin] + 2 S-adenosyl-L-methionine = (sulfur carrier)-H + biotin + 2 5'-deoxyadenosine + 2 L-methionine + 2 oxidized [2Fe-2S]-[ferredoxin]. The protein operates within cofactor biosynthesis; biotin biosynthesis; biotin from 7,8-diaminononanoate: step 2/2. Catalyzes the conversion of dethiobiotin (DTB) to biotin by the insertion of a sulfur atom into dethiobiotin via a radical-based mechanism. The polypeptide is Biotin synthase (Actinobacillus succinogenes (strain ATCC 55618 / DSM 22257 / CCUG 43843 / 130Z)).